The sequence spans 198 residues: Dynactin subunit 5 (198 aa).

Residues 179–188 (NTPASKGLPS) show a composition bias toward polar residues. Positions 179 to 198 (NTPASKGLPSTPTKLQTTTT) are disordered. A compositionally biased stretch (low complexity) spans 189-198 (TPTKLQTTTT).

Belongs to the dynactin subunits 5/6 family. Dynactin subunit 5 subfamily. As to quaternary structure, member of the pointed-end complex of the dynactin shoulder complex.

Its subcellular location is the cytoplasm. The protein localises to the cytoskeleton. This chain is Dynactin subunit 5 (dynE), found in Dictyostelium discoideum (Social amoeba).